A 1296-amino-acid polypeptide reads, in one-letter code: Capping protein, Arp2/3 and myosin-I linker protein 2 (1296 aa).

LRR repeat units follow at residues 63 to 87 (DCTFSYLEVQAMALQETPPRVTFEL), 88 to 110 (ESLPELVLEFPCVAALEQLAQHV), 248 to 271 (ELVLEACGLRGDFVRRLAQALAGH), 273 to 296 (NSGLRELSLSGNLLDDRGMRALGR), 305 to 328 (DSTLTHLDLSGNPGALGPSQDSGG), 363 to 386 (CSSLTHLEASRNIFSRMKSQAAPA), 395 to 415 (TRMLRHLGLAGCKLPPEALRA), 426 to 448 (IHDLHLDLSACELRSVGAQVIQD), 453 to 477 (AGALSSLDLSDNGFGSDMVTLVLAI), 480 to 506 (SRSLKHVALGRNFNVRCKETLDDVLHR), 515 to 538 (DCPLQSLSVAESRLKQGASILIRA), 542 to 565 (NPKLTALDISGNAIGDAGAKMLAK), 570 to 594 (NTRLRSVIWDRNNTSALGLLDVAQA), 598 to 621 (NHSLKSMPLPLNDVTQAHRSRPEL), and 836 to 859 (TMAPAVPPLGGNELSPLETGGLEE). The tract at residues 507–601 (IAQLMQDDDC…AQALEQNHSL (95 aa)) is tropomodulin-like. Residues 975–1002 (ATPVPRTLRKKLGTLFAFKKPRSTRGPR) form a necessary for localization at the cell membrane region. The segment at 988-1296 (TLFAFKKPRS…TDQRGGGPNP (309 aa)) is disordered. Position 1008 is a phosphoserine (Ser-1008). Basic and acidic residues-rich tracts occupy residues 1079-1091 (RPDKRRPLERGDT) and 1118-1134 (ESKRKQSKDGEIKKAGS). Phosphoserine is present on Ser-1134. At Thr-1145 the chain carries Phosphothreonine. Over residues 1176-1185 (TWKTLGQQLN) the composition is skewed to polar residues. Arg-1191 is modified (omega-N-methylarginine). 2 stretches are compositionally biased toward pro residues: residues 1199–1209 (PGPPSPCPSPS) and 1267–1285 (PLPPYPTEPSSPERSPPSP). Ser-1203 and Ser-1281 each carry phosphoserine.

It belongs to the CARMIL family. In terms of assembly, forms homodimers. Interacts (via C-terminus) with heterodimeric capping protein (CP); the interaction inhibits CP activity and hence promotes actin polymerization at the barbed end of actin filaments.

It is found in the cytoplasm. It localises to the cytoskeleton. Its subcellular location is the cell membrane. The protein localises to the cell projection. The protein resides in the lamellipodium. It is found in the ruffle. Its function is as follows. Cell membrane-cytoskeleton-associated protein that plays a role in the regulation of actin polymerization at the barbed end of actin filaments. Prevents F-actin heterodimeric capping protein (CP) activity at the leading edges of migrating cells, and hence generates uncapped barbed ends and enhances actin polymerization. Plays a role in cell protrusion formations; involved in cell polarity, lamellipodial assembly, membrane ruffling and macropinosome formations. Involved as well in cell migration and invadopodia formation during wound healing. Required for CD28-mediated stimulation of NF-kappa-B signaling, involved in naive T cells activation, maturation into T memory cells, and differentiation into T helper cells. Required for CD28-mediated differentiation of T regulatory cells. This is Capping protein, Arp2/3 and myosin-I linker protein 2 from Mus musculus (Mouse).